A 307-amino-acid chain; its full sequence is Aspartate carbamoyltransferase catalytic subunit (307 aa).

Residues arginine 55 and threonine 56 each coordinate carbamoyl phosphate. Lysine 85 contributes to the L-aspartate binding site. Positions 106, 135, and 138 each coordinate carbamoyl phosphate. Arginine 168 and arginine 230 together coordinate L-aspartate. Carbamoyl phosphate contacts are provided by leucine 268 and proline 269.

It belongs to the aspartate/ornithine carbamoyltransferase superfamily. ATCase family. As to quaternary structure, heterododecamer (2C3:3R2) of six catalytic PyrB chains organized as two trimers (C3), and six regulatory PyrI chains organized as three dimers (R2).

It carries out the reaction carbamoyl phosphate + L-aspartate = N-carbamoyl-L-aspartate + phosphate + H(+). The protein operates within pyrimidine metabolism; UMP biosynthesis via de novo pathway; (S)-dihydroorotate from bicarbonate: step 2/3. In terms of biological role, catalyzes the condensation of carbamoyl phosphate and aspartate to form carbamoyl aspartate and inorganic phosphate, the committed step in the de novo pyrimidine nucleotide biosynthesis pathway. This is Aspartate carbamoyltransferase catalytic subunit from Photorhabdus laumondii subsp. laumondii (strain DSM 15139 / CIP 105565 / TT01) (Photorhabdus luminescens subsp. laumondii).